The chain runs to 179 residues: ADP-ribosylation factor-like protein 5A (179 aa).

Gly-2 carries N-myristoyl glycine lipidation. Residues 23–30 (GLDNAGKT), 66–70 (DIGGQ), 125–128 (NKQD), and Ala-159 contribute to the GTP site.

The protein belongs to the small GTPase superfamily. Arf family. As to expression, low amounts were found in most tissues examined with highest levels in brain, intestine and thymus.

Its function is as follows. Lacks ADP-ribosylation enhancing activity. This chain is ADP-ribosylation factor-like protein 5A (Arl5a), found in Rattus norvegicus (Rat).